We begin with the raw amino-acid sequence, 1898 residues long: 1-phosphatidylinositol 4,5-bisphosphate phosphodiesterase epsilon-1 (1898 aa).

Residues 66-328 form the Ras-GEF domain; sequence FPEEVAFQLS…EREQKEKEAK (263 aa). Disordered regions lie at residues 419-444 and 569-722; these read QPLD…GVGV and TNTN…GPSG. Residues 569–583 are compositionally biased toward polar residues; it reads TNTNATRPNDSSLSS. Basic residues predominate over residues 590–605; it reads SRLKNLKNAMQKKLRG. Low complexity-rich tracts occupy residues 625 to 637, 666 to 687, and 701 to 716; these read PPSI…SQSG, YTPR…GGRS, and SGSI…QVSG. The PI-PLC X-box domain occupies 910 to 1058; it reads EDLRYPLSHY…MKNKILIKNK (149 aa). Active-site residues include His-925 and His-970. Disordered regions lie at residues 1082–1178 and 1238–1274; these read QLNL…DRKT and EEGP…STQL. Residues 1098-1123 are compositionally biased toward acidic residues; sequence TVDEVEDDDLDEFLDDEENEEDDQEE. Positions 1124-1144 are enriched in basic and acidic residues; the sequence is VQVRSEKEDSPKTSKRAEKSA. The segment covering 1146 to 1155 has biased composition (polar residues); it reads NIKQQDSLCS. Low complexity-rich tracts occupy residues 1163–1172 and 1242–1253; these read KPSTSKTTSK and ASASLSFSSRAR. In terms of domain architecture, PI-PLC Y-box spans 1279–1385; that stretch reads AAEFLGSVRA…CGYQLKPRCL (107 aa). Positions 1391-1517 constitute a C2 domain; the sequence is LLYNKFLPLS…PLRTPTNLPI (127 aa). The 96-residue stretch at 1570–1665 folds into the Ras-associating 1 domain; that stretch reads QIFVLRITGA…RRFVLRKKGS (96 aa). Over residues 1680–1694 the composition is skewed to low complexity; that stretch reads GTSGSSTSVSPSPLT. The disordered stretch occupies residues 1680 to 1711; it reads GTSGSSTSVSPSPLTKDGHVKSASSNQLHGRS. Positions 1738–1857 constitute a Ras-associating 2 domain; that stretch reads DTFLVCVHNV…GRFVLENRKD (120 aa).

In terms of assembly, interacts (via Ras-associating domain 1) with let-60 (in GTP-bound form). Ca(2+) serves as cofactor. In terms of tissue distribution, expressed in the spermatheca, vulva, intestine and excretory cells. Expressed in sensory neurons AWC, AFD, ASE, ASG and BAG, interneurons, ventral nerve cord neurons and tail neurons. Expressed in body muscles.

It carries out the reaction a 1,2-diacyl-sn-glycero-3-phospho-(1D-myo-inositol-4,5-bisphosphate) + H2O = 1D-myo-inositol 1,4,5-trisphosphate + a 1,2-diacyl-sn-glycerol + H(+). Functionally, the production of the second messenger molecules diacylglycerol (DAG) and inositol 1,4,5-trisphosphate (IP3) is mediated by activated phosphatidylinositol-specific phospholipase C enzymes. plc-1 is a bifunctional enzyme which also regulates small GTPases of the Ras superfamily through its Ras guanine-exchange factor (RasGEF) activity. By activating IP3 receptor itr-1-mediated intracellular Ca(2+) release via the production of IP3, regulates ovulation by controlling contraction and/or dilation of the distal spermatheca valve during oocyte entry and the timing of the dilation of the spermatheca-uterine valve during oocyte exit. In a similar manner, plays an essential role in epidermal morphogenesis by regulating migration of epidermal cells during ventral closure and to a lesser extent by regulating epidermal cell dorsal intercalation. Involved in the immune response to S.aureus bacterium by activating kinase dkf-1 via the production of DAG which in turn activates transcription factor hlh-30. In ASER neurons, required for adjusting the orientation behavior in salt gradients based on the memory of previous salt concentration encountered. This chain is 1-phosphatidylinositol 4,5-bisphosphate phosphodiesterase epsilon-1, found in Caenorhabditis elegans.